Here is a 213-residue protein sequence, read N- to C-terminus: Uracil phosphoribosyltransferase (213 aa).

5-phospho-alpha-D-ribose 1-diphosphate is bound by residues Arg78, Arg103, and 130-138; that span reads DPMLATGGS. Residues Ile193 and 198 to 200 contribute to the uracil site; that span reads GDA. Asp199 is a binding site for 5-phospho-alpha-D-ribose 1-diphosphate.

Belongs to the UPRTase family. The cofactor is Mg(2+).

The catalysed reaction is UMP + diphosphate = 5-phospho-alpha-D-ribose 1-diphosphate + uracil. It participates in pyrimidine metabolism; UMP biosynthesis via salvage pathway; UMP from uracil: step 1/1. Its activity is regulated as follows. Allosterically activated by GTP. Catalyzes the conversion of uracil and 5-phospho-alpha-D-ribose 1-diphosphate (PRPP) to UMP and diphosphate. The polypeptide is Uracil phosphoribosyltransferase (Bordetella bronchiseptica (strain ATCC BAA-588 / NCTC 13252 / RB50) (Alcaligenes bronchisepticus)).